The following is a 198-amino-acid chain: Recombination protein RecR (198 aa).

The C4-type zinc finger occupies 56 to 71 (CKVCGNFSEEDECVIC). The 96-residue stretch at 79 to 174 (GVICVVEEPK…RVSKLASGLP (96 aa)) folds into the Toprim domain.

The protein belongs to the RecR family.

In terms of biological role, may play a role in DNA repair. It seems to be involved in an RecBC-independent recombinational process of DNA repair. It may act with RecF and RecO. The protein is Recombination protein RecR of Tropheryma whipplei (strain Twist) (Whipple's bacillus).